The chain runs to 701 residues: MTEHGIKWACEYCTYENWPSAIKCTMCRAPRPSGAIITEEPFKNSTPDVGSMERESGSPLICPDSSARPRVKSSYSMETSTKWSCHMCTYLNWPRAIRCTQCLSQRRTRSPTESPQSSGSSLRAIPSPIDPCEEYNDRNKLNIKGQHWTCSACTYENCAKAKKCVVCDHPTPNNMDAIELANTDEASSIINEQDRARWRGGCSSSNSQRRSPPTSKRDSDMDFQRIELAGAVGSKEEFELDLKKLKQIKNRMRKTDWLFLNACVGVVEGDLSAVEAYKTSGGDIARQLSADEVRLLNRPSAFDVGYTLVHLSIRFQRQDMLAILLTEFSQHAAKCIPAMVCPELTEQIRREIAASVHQRKGDFACYFLTDLVTFTLPADIEDLPPTVQEKLFDEVLDRDVQKELEEESPIINWSLELGTRLDSRLYALWNRTAGDCLLDSVLQATWGIYDKDSVLRKALHDSLHDCSHWFYSRWKEWESWYSQSFGLHFSLREEQWQEDWAFILSLASQPGASLEQTHIFVLAHILRRPIIVYGVKYYKSFRGETLGYTRFQGVYLPLLWEQSFCWKSPIALGYTRGHFSALVAMENDGFDNRGAGANLNTDDDVTVTFLPLVDSERKLLHIHFLSAQELGNEDQQEKLLREWMDCCVTEGGVLVAMQKSSRRRNHPLVTQMVEKWLDGYRQIRPCTALSDGEEDEDDEDE.

Residues 3-33 (EHGIKWACEYCTYENWPSAIKCTMCRAPRPS) form a RanBP2-type 1 zinc finger. 4 residues coordinate Zn(2+): C10, C13, C24, and C27. The disordered stretch occupies residues 38-59 (TEEPFKNSTPDVGSMERESGSP). The RanBP2-type 2 zinc-finger motif lies at 79–108 (TSTKWSCHMCTYLNWPRAIRCTQCLSQRRT). C85, C88, C99, and C102 together coordinate Zn(2+). A disordered region spans residues 108 to 129 (TRSPTESPQSSGSSLRAIPSPI). The segment covering 111 to 121 (PTESPQSSGSS) has biased composition (low complexity). The segment at 143–173 (IKGQHWTCSACTYENCAKAKKCVVCDHPTPN) adopts a RanBP2-type 3 zinc-finger fold. Zn(2+) contacts are provided by C150, C153, C164, and C167. Residues 198–220 (WRGGCSSSNSQRRSPPTSKRDSD) are disordered. The segment covering 202–214 (CSSSNSQRRSPPT) has biased composition (polar residues). 2 ANK repeats span residues 253–283 (RKTDWLFLNACVGVVEGDLSAVEAYKTSGGD) and 306–333 (YTLVHLSIRFQRQDMLAILLTEFSQHAA). Residues 425-585 (LYALWNRTAG…RGHFSALVAM (161 aa)) enclose the OTU domain. C436 (nucleophile) is an active-site residue. H578 functions as the Proton acceptor in the catalytic mechanism.

Belongs to the peptidase C64 family.

The protein localises to the cytoplasm. It is found in the nucleus. The catalysed reaction is Thiol-dependent hydrolysis of ester, thioester, amide, peptide and isopeptide bonds formed by the C-terminal Gly of ubiquitin (a 76-residue protein attached to proteins as an intracellular targeting signal).. In terms of biological role, ubiquitin thioesterase, which specifically hydrolyzes 'Lys-29'-linked and 'Lys-33'-linked diubiquitin. Also cleaves 'Lys-63'-linked chains, but with 40-fold less efficiency compared to 'Lys-29'-linked ones. Positive regulator of the Wnt signaling pathway that deubiquitinates apc protein, a negative regulator of Wnt-mediated transcription. Acts as a regulator of autophagy by mediating deubiquitination of pik3c3/vps34, thereby promoting autophagosome maturation. Plays a role in the regulation of cell morphology and cytoskeletal organization. Required in the stress fiber dynamics and cell migration. In Xenopus tropicalis (Western clawed frog), this protein is Ubiquitin thioesterase zranb1 (zranb1).